A 200-amino-acid chain; its full sequence is MTMVIGLTGGIGSGKTTVANLFGDYGIDIIDADIIAREVVEPNTTGLNAIVDKLGADILLTDGTLDRSKLRNAIFNQQQLKDWLNGLLHPLIREKMLSNISKATSPYCLLVVPLMVENNLQTMTHRLLVVDVDESVQIDRTQARDNVAPEHVKKILMAQASRQNRNAAADDIISNNGNSAELKNKVAELHQKYIKMSHLY.

The DPCK domain occupies 4–200 (VIGLTGGIGS…QKYIKMSHLY (197 aa)). An ATP-binding site is contributed by 12–17 (GSGKTT).

It belongs to the CoaE family.

Its subcellular location is the cytoplasm. The catalysed reaction is 3'-dephospho-CoA + ATP = ADP + CoA + H(+). It participates in cofactor biosynthesis; coenzyme A biosynthesis; CoA from (R)-pantothenate: step 5/5. Its function is as follows. Catalyzes the phosphorylation of the 3'-hydroxyl group of dephosphocoenzyme A to form coenzyme A. This chain is Dephospho-CoA kinase, found in Photobacterium profundum (strain SS9).